The primary structure comprises 336 residues: Terephthalate 1,2-dioxygenase, reductase component 1 (336 aa).

Residues 3–91 (HQIHIHDSDI…DIRIQPSSFR (89 aa)) form the 2Fe-2S ferredoxin-type domain. [2Fe-2S] cluster is bound by residues Cys-37, Cys-42, Cys-45, and Cys-75. Positions 98–197 (RKRFTAKVYS…ELPFGSIALK (100 aa)) constitute an FAD-binding FR-type domain.

Monomer. Part of a multicomponent enzyme system composed of a reductase (TphA1I or TphA1II) and a two-subunit oxygenase component (TphA2I or TphA2II and TphA3I or TphA3II). Requires FAD as cofactor. [2Fe-2S] cluster serves as cofactor.

The catalysed reaction is terephthalate + NADH + O2 + H(+) = (3S,4R)-3,4-dihydroxycyclohexa-1,5-diene-1,4-dicarboxylate + NAD(+). In terms of biological role, component of the terephthalate 1,2-dioxygenase multicomponent enzyme system which catalyzes the dioxygenation of terephthalate (TER/TPA) to 1,2-dihydroxy-3,5-cyclohexadiene-1,4-dicarboxylic acid (DCD). TphA1 probably reduces TphA2A3. It can also use 2,5-dicarboxypyridine (PDC) and 1,4-napthalenedicarboxylic acid (NDC) as substrates, and preferentially uses NADPH which is the physiological electron donor. The chain is Terephthalate 1,2-dioxygenase, reductase component 1 (tphA1I) from Comamonas sp.